The following is a 215-amino-acid chain: Octanoyltransferase (215 aa).

A BPL/LPL catalytic domain is found at 33–209 (PDTPDQLWLV…QFARKLGYET (177 aa)). Substrate-binding positions include 72–79 (RGGQVTYH), 139–141 (SLG), and 152–154 (GLA). Catalysis depends on Cys-170, which acts as the Acyl-thioester intermediate.

Belongs to the LipB family.

It localises to the cytoplasm. It carries out the reaction octanoyl-[ACP] + L-lysyl-[protein] = N(6)-octanoyl-L-lysyl-[protein] + holo-[ACP] + H(+). It participates in protein modification; protein lipoylation via endogenous pathway; protein N(6)-(lipoyl)lysine from octanoyl-[acyl-carrier-protein]: step 1/2. Its function is as follows. Catalyzes the transfer of endogenously produced octanoic acid from octanoyl-acyl-carrier-protein onto the lipoyl domains of lipoate-dependent enzymes. Lipoyl-ACP can also act as a substrate although octanoyl-ACP is likely to be the physiological substrate. This chain is Octanoyltransferase, found in Cellvibrio japonicus (strain Ueda107) (Pseudomonas fluorescens subsp. cellulosa).